A 273-amino-acid polypeptide reads, in one-letter code: SPRY domain-containing SOCS box protein 1 (273 aa).

Position 31 is a phosphotyrosine; by MET (tyrosine 31). A B30.2/SPRY domain is found at 33 to 231 (KPTRLDLLLD…IRMRYLNGLD (199 aa)). The region spanning 232 to 273 (PEPLPLMDLCRRSVRLALGRERLGEIHTLPLPASLKAYLLYQ) is the SOCS box domain.

This sequence belongs to the SPSB family. As to quaternary structure, component of the probable ECS(SPSB1) E3 ubiquitin-protein ligase complex which contains CUL5, RNF7/RBX2, Elongin BC complex and SPSB1. Interacts with CUL5, RNF7, ELOB and ELOC. Directly interacts with MET tyrosine kinase domain in the presence and in the absence of HGF, however HGF treatment has a positive effect on this interaction. When phosphorylated, interacts with RASA1 without affecting its stability. Interacts (via B30.2/SPRY domain) with PAWR; this interaction is direct and occurs in association with the Elongin BC complex. Interacts with NOS2. Interacts with EPHB2.

The protein resides in the cytoplasm. It is found in the cytosol. The protein operates within protein modification; protein ubiquitination. Functionally, substrate recognition component of a SCF-like ECS (Elongin BC-CUL2/5-SOCS-box protein) E3 ubiquitin-protein ligase complex which mediates the ubiquitination and subsequent proteasomal degradation of target proteins. Negatively regulates nitric oxide (NO) production and limits cellular toxicity in activated macrophages by mediating the ubiquitination and proteasomal degradation of NOS2. Acts as a bridge which links NOS2 with the ECS E3 ubiquitin ligase complex components ELOC and CUL5. The protein is SPRY domain-containing SOCS box protein 1 (SPSB1) of Homo sapiens (Human).